We begin with the raw amino-acid sequence, 637 residues long: 1-deoxy-D-xylulose-5-phosphate synthase (637 aa).

Thiamine diphosphate is bound by residues histidine 76 and 117-119 (GHS). Residue aspartate 148 participates in Mg(2+) binding. Thiamine diphosphate-binding positions include 149–150 (GA), asparagine 177, tyrosine 294, and glutamate 381. Asparagine 177 contributes to the Mg(2+) binding site.

The protein belongs to the transketolase family. DXPS subfamily. Homodimer. Requires Mg(2+) as cofactor. Thiamine diphosphate serves as cofactor.

The enzyme catalyses D-glyceraldehyde 3-phosphate + pyruvate + H(+) = 1-deoxy-D-xylulose 5-phosphate + CO2. It participates in metabolic intermediate biosynthesis; 1-deoxy-D-xylulose 5-phosphate biosynthesis; 1-deoxy-D-xylulose 5-phosphate from D-glyceraldehyde 3-phosphate and pyruvate: step 1/1. Catalyzes the acyloin condensation reaction between C atoms 2 and 3 of pyruvate and glyceraldehyde 3-phosphate to yield 1-deoxy-D-xylulose-5-phosphate (DXP). The chain is 1-deoxy-D-xylulose-5-phosphate synthase from Neisseria gonorrhoeae (strain ATCC 700825 / FA 1090).